A 175-amino-acid polypeptide reads, in one-letter code: Small ribosomal subunit protein mS38 (175 aa).

It belongs to the mitochondrion-specific ribosomal protein mS38 family. As to quaternary structure, component of the mitochondrial small ribosomal subunit (mt-SSU). Mature yeast 74S mitochondrial ribosomes consist of a small (37S) and a large (54S) subunit. The 37S small subunit contains a 15S ribosomal RNA (15S mt-rRNA) and at least 32 different proteins. The 54S large subunit contains a 21S rRNA (21S mt-rRNA) and at least 45 different proteins.

The protein localises to the mitochondrion. The protein resides in the mitochondrion inner membrane. Component of the mitochondrial ribosome (mitoribosome), a dedicated translation machinery responsible for the synthesis of mitochondrial genome-encoded proteins, including at least some of the essential transmembrane subunits of the mitochondrial respiratory chain. The mitoribosomes are attached to the mitochondrial inner membrane and translation products are cotranslationally integrated into the membrane. mS38 is also involved in the splicing of the COX1 mRNA. This is Small ribosomal subunit protein mS38 (cox24) from Schizosaccharomyces pombe (strain 972 / ATCC 24843) (Fission yeast).